The chain runs to 127 residues: Large ribosomal subunit protein bL12 (127 aa).

The segment at V101 to K127 is disordered. Residues V105–L117 show a composition bias toward basic and acidic residues.

This sequence belongs to the bacterial ribosomal protein bL12 family. Homodimer. Part of the ribosomal stalk of the 50S ribosomal subunit. Forms a multimeric L10(L12)X complex, where L10 forms an elongated spine to which 2 to 4 L12 dimers bind in a sequential fashion. Binds GTP-bound translation factors.

In terms of biological role, forms part of the ribosomal stalk which helps the ribosome interact with GTP-bound translation factors. Is thus essential for accurate translation. The chain is Large ribosomal subunit protein bL12 from Geobacter metallireducens (strain ATCC 53774 / DSM 7210 / GS-15).